The following is a 572-amino-acid chain: MSAILSADDLNDFISPGVACIKPVETLPAAKPSADNELEISFNTDAPLPSDLPPAQISLTDCLACSGCVTSAEAVLVSLQSHAEVLSQLDSAPGIRLHKSATGTGVSVEGLEQGGKIYVASVSPQSRASIAATFGVTEREAGYMIEHLLSGPKGIKNRAVYRNAFQWVVDTNITREACLVLGAEEVIASMNGTEETKKPILTSSCPGWVCYAEKTHPHVLPHLSRMKSPQALMGTLIKTTLSRKLGISPERIWHVAVMPCFDKKLEASREELTDAVWEGTGTRGVRDVDSVITSKELLMLADSRRIDFSKLPRTPLPSSSHIPFPDPTLNSFLFPSNRRSSSNGSRDAGSSGGNLHYALHYFASQHKGSSVQTIKGRNADVVDYTVVADNGDILLKAARYYGFRNIQNLVRRLKPARPSRMPGGKPIGSARRPNGKATGPDYTYVEVMACPGGCTNGGGQIKVDDPINTSRLEGDSKPGPQEQKMWLAQVDEAYFSGDDSTVCSSVDDRNDLVEGISPSYIKDTLSHWATTTGLDLERLVYTTYREVVSDVGKNAGDAERVIEIANKIGGGW.

[4Fe-4S] cluster is bound by residues cysteine 20, cysteine 62, cysteine 65, cysteine 68, cysteine 205, and cysteine 260. A disordered region spans residues 416–436 (ARPSRMPGGKPIGSARRPNGK). 2 residues coordinate [4Fe-4S] cluster: cysteine 450 and cysteine 454.

Belongs to the NARF family.

Its function is as follows. Component of the cytosolic Fe/S protein assembly machinery. Required for maturation of extramitochondrial Fe/S proteins. May play a role in the transfer of pre-assembled Fe/S clusters to target apoproteins. The chain is Cytosolic Fe-S cluster assembly factor NAR1 (NAR1) from Botryotinia fuckeliana (strain B05.10) (Noble rot fungus).